Here is a 72-residue protein sequence, read N- to C-terminus: uncharacterized protein (72 aa).

The disordered stretch occupies residues 51–72 (AKGGRQRGETVVVDDQCKEHKE).

Belongs to the YiiE family.

This is an uncharacterized protein from Escherichia coli O6:K15:H31 (strain 536 / UPEC).